Consider the following 402-residue polypeptide: Prostaglandin E2 receptor EP1 subtype (402 aa).

Over 1–35 (MSPCGPLNLSLAGEATTCAAPWVPNTSAVPPSGAS) the chain is Extracellular. Asparagine 8 and asparagine 25 each carry an N-linked (GlcNAc...) asparagine glycan. Residues 36-62 (PALPIFSMTLGAVSNLLALALLAQAAG) traverse the membrane as a helical segment. The Cytoplasmic portion of the chain corresponds to 63–72 (RLRRRRSAAT). A helical membrane pass occupies residues 73 to 96 (FLLFVASLLATDLAGHVIPGALVL). The Extracellular segment spans residues 97-111 (RLYTAGRAPAGGACH). An intrachain disulfide couples cysteine 110 to cysteine 188. Residues 112 to 133 (FLGGCMVFFGLCPLLLGCGMAV) traverse the membrane as a helical segment. Topologically, residues 134 to 155 (ERCVGVTRPLLHAARVSVARAR) are cytoplasmic. A helical membrane pass occupies residues 156-177 (LALAAVAAVALAVALLPLARVG). At 178-201 (RYELQYPGTWCFIGLGPPGGWRQA) the chain is on the extracellular side. The chain crosses the membrane as a helical span at residues 202–227 (LLAGLFASLGLVALLAALVCNTLSGL). Over 228–294 (ALLRARWRRR…ARRARAHDVE (67 aa)) the chain is Cytoplasmic. The segment at 238–266 (SRRPPPASGPDSRRRWGAHGPRSASASSA) is disordered. A helical transmembrane segment spans residues 295–321 (MVGQLVGIMVVSCICWSPMLVLVALAV). Over 322-332 (GGWSSTSLQRP) the chain is Extracellular. A helical transmembrane segment spans residues 333–354 (LFLAVRLASWNQILDPWVYILL). The Cytoplasmic segment spans residues 355-402 (RQAVLRQLLRLLPPRAGAKGGPAGLGLTPSAWEASSLRSSRHSGLSHF).

Belongs to the G-protein coupled receptor 1 family. In terms of processing, phosphorylated. In terms of tissue distribution, abundant in kidney. Lower level expression in lung, skeletal muscle and spleen, lowest expression in testis and not detected in liver brain and heart.

The protein localises to the cell membrane. Its function is as follows. Receptor for prostaglandin E2 (PGE2). The activity of this receptor is mediated by G(q) proteins which activate a phosphatidylinositol-calcium second messenger system. May play a role as an important modulator of renal function. Implicated the smooth muscle contractile response to PGE2 in various tissues. The polypeptide is Prostaglandin E2 receptor EP1 subtype (PTGER1) (Homo sapiens (Human)).